The sequence spans 362 residues: Myricetin 3'-O-methyltransferase 4 (362 aa).

D229 serves as a coordination point for S-adenosyl-L-methionine. H267 functions as the Proton acceptor in the catalytic mechanism.

The protein belongs to the class I-like SAM-binding methyltransferase superfamily. Cation-independent O-methyltransferase family. In terms of assembly, homodimer. In terms of tissue distribution, mainly expressed in stem and petiole trichomes.

The enzyme catalyses myricetin + S-adenosyl-L-methionine = laricitrin + S-adenosyl-L-homocysteine + H(+). It functions in the pathway flavonoid metabolism. Flavonoid 3'-O-methyltransferase involved in the biosynthesis of polymethoxylated flavonoids natural products such as myricetin derivatives, aroma compounds possessing antioxidant properties and exhibiting pharmacological activities such as anti-carcinogen, anti-viral, anti-thrombotic, anti-diabetic, anti-atherosclerotic, and anti-inflammatory effects. Catalyzes S-adenosylmethionine-dependent regioselective 3'-O-methylation of flavonoids; active on various hydroxylated flavonoid substrates, including myricetin, thus producing 3'-methyl myricetin (laricitrin). The chain is Myricetin 3'-O-methyltransferase 4 from Solanum lycopersicum (Tomato).